The sequence spans 214 residues: Cell division protein B1 (214 aa).

Functionally, part of a cell division machinery. This is Cell division protein B1 from Sulfolobus acidocaldarius (strain ATCC 33909 / DSM 639 / JCM 8929 / NBRC 15157 / NCIMB 11770).